The chain runs to 150 residues: Endoribonuclease YbeY (150 aa).

3 residues coordinate Zn(2+): H102, H106, and H112.

It belongs to the endoribonuclease YbeY family. The cofactor is Zn(2+).

It is found in the cytoplasm. Functionally, single strand-specific metallo-endoribonuclease involved in late-stage 70S ribosome quality control and in maturation of the 3' terminus of the 16S rRNA. This is Endoribonuclease YbeY from Thermotoga sp. (strain RQ2).